A 96-amino-acid chain; its full sequence is Co-chaperonin GroES (96 aa).

Belongs to the GroES chaperonin family. As to quaternary structure, heptamer of 7 subunits arranged in a ring. Interacts with the chaperonin GroEL.

It is found in the cytoplasm. Together with the chaperonin GroEL, plays an essential role in assisting protein folding. The GroEL-GroES system forms a nano-cage that allows encapsulation of the non-native substrate proteins and provides a physical environment optimized to promote and accelerate protein folding. GroES binds to the apical surface of the GroEL ring, thereby capping the opening of the GroEL channel. This is Co-chaperonin GroES from Hydrogenovibrio crunogenus (strain DSM 25203 / XCL-2) (Thiomicrospira crunogena).